A 714-amino-acid chain; its full sequence is WD repeat and coiled-coil-containing protein (714 aa).

2 WD repeats span residues 55–98 (GQFE…LEQN) and 154–194 (KGSG…LVPC). Disordered regions lie at residues 432-454 (EEST…SENF) and 531-564 (QASR…KEKN). Positions 567-595 (QLTQNMERIFTRFAEVQQCLSEIREFTQN) form a coiled coil. Residues 685-714 (RSARRKSPARPPSGADDFPPESPKSPSMEK) are disordered.

The protein is WD repeat and coiled-coil-containing protein (wdcp) of Danio rerio (Zebrafish).